The following is a 294-amino-acid chain: UPF0761 membrane protein MADE_1017605/MADE_1018330 (294 aa).

Transmembrane regions (helical) follow at residues 45 to 65, 99 to 119, 141 to 161, 182 to 202, 213 to 233, and 247 to 267; these read LLSLVPFIMVTFTIMSAFPAF, ASQMSAIGILSLLVVALMLIS, FAIYWMVITLGPMLIGSSVVV, FLLSLVPSGAALLAFAILYMV, AFVGAIVATIAFEITKSGFAL, and ALAVVPILFLWVYLSWIIVLF.

The protein belongs to the UPF0761 family.

It localises to the cell inner membrane. This Alteromonas mediterranea (strain DSM 17117 / CIP 110805 / LMG 28347 / Deep ecotype) protein is UPF0761 membrane protein MADE_1017605/MADE_1018330.